Reading from the N-terminus, the 1253-residue chain is Methionine synthase (1253 aa).

The Hcy-binding domain occupies 6–326 (QDEIEAILRK…DHIREIAEAV (321 aa)). The Zn(2+) site is built by C248, C311, and C312. Residues 359–620 (FVNIGERCNV…IHKDLLQLCE (262 aa)) enclose the Pterin-binding domain. (6S)-5,6,7,8-tetrahydrofolate is bound by residues 370-372 (GSR), D437, N458, D525, N567, R573, and R579. The B12-binding N-terminal domain maps to 650-747 (QTDEWRNGSI…FMEKEREEAR (98 aa)). Methylcob(III)alamin is bound by residues E697, 770-774 (GDVHD), H773, S818, T822, and A874. Residues 760–895 (QGTIVLATVK…DENLRDDYFE (136 aa)) form the B12-binding domain. One can recognise an AdoMet activation domain in the interval 911–1253 (SLKERKYVPL…LGPILGYDTD (343 aa)). Residues D962, R1160, and 1215–1216 (YF) contribute to the S-adenosyl-L-methionine site. T1252 is subject to Phosphothreonine.

It belongs to the vitamin-B12 dependent methionine synthase family. As to quaternary structure, monomer. Dimer. Forms a multiprotein complex with MMACHC, MMADHC and MTRR. The cofactor is methylcob(III)alamin. Zn(2+) is required as a cofactor.

It localises to the cytoplasm. The enzyme catalyses (6S)-5-methyl-5,6,7,8-tetrahydrofolate + L-homocysteine = (6S)-5,6,7,8-tetrahydrofolate + L-methionine. The protein operates within amino-acid biosynthesis; L-methionine biosynthesis via de novo pathway; L-methionine from L-homocysteine (MetH route): step 1/1. In terms of biological role, catalyzes the transfer of a methyl group from methylcob(III)alamin (MeCbl) to homocysteine, yielding enzyme-bound cob(I)alamin and methionine in the cytosol. MeCbl is an active form of cobalamin (vitamin B12) used as a cofactor for methionine biosynthesis. Cob(I)alamin form is regenerated to MeCbl by a transfer of a methyl group from 5-methyltetrahydrofolate. The processing of cobalamin in the cytosol occurs in a multiprotein complex composed of at least MMACHC, MMADHC, MTRR (methionine synthase reductase) and MTR which may contribute to shuttle safely and efficiently cobalamin towards MTR in order to produce methionine. The chain is Methionine synthase from Mus musculus (Mouse).